The primary structure comprises 339 residues: 7,8-didemethyl-8-hydroxy-5-deazariboflavin synthase (339 aa).

In terms of domain architecture, Radical SAM core spans 13 to 258 (ITYSKNIFIP…RDTDVSIQVP (246 aa)). [4Fe-4S] cluster contacts are provided by C27, C31, and C34.

Belongs to the radical SAM superfamily. CofG family. Consists of two subunits, CofG and CofH. It depends on [4Fe-4S] cluster as a cofactor.

It carries out the reaction 5-amino-5-(4-hydroxybenzyl)-6-(D-ribitylimino)-5,6-dihydrouracil + S-adenosyl-L-methionine = 7,8-didemethyl-8-hydroxy-5-deazariboflavin + 5'-deoxyadenosine + L-methionine + NH4(+) + H(+). Its pathway is cofactor biosynthesis; coenzyme F0 biosynthesis. In terms of biological role, catalyzes the radical-mediated synthesis of 7,8-didemethyl-8-hydroxy-5-deazariboflavin from 5-amino-5-(4-hydroxybenzyl)-6-(D-ribitylimino)-5,6-dihydrouracil. The chain is 7,8-didemethyl-8-hydroxy-5-deazariboflavin synthase from Methanobrevibacter smithii (strain ATCC 35061 / DSM 861 / OCM 144 / PS).